Consider the following 169-residue polypeptide: Endoribonuclease YbeY (169 aa).

Zn(2+) contacts are provided by H130, H134, and H140.

It belongs to the endoribonuclease YbeY family. Zn(2+) is required as a cofactor.

Its subcellular location is the cytoplasm. Functionally, single strand-specific metallo-endoribonuclease involved in late-stage 70S ribosome quality control and in maturation of the 3' terminus of the 16S rRNA. The chain is Endoribonuclease YbeY from Neisseria meningitidis serogroup B (strain ATCC BAA-335 / MC58).